Consider the following 84-residue polypeptide: MAHKKGGGSTKNGRDSNPKYLGVKAAGGSVVNAGTIILRQRGTAIKPGNNAGLGRDHTIFALVDGTVHFRNGRNNKKRVDIIPS.

The disordered stretch occupies residues 1 to 20 (MAHKKGGGSTKNGRDSNPKY).

Belongs to the bacterial ribosomal protein bL27 family.

The sequence is that of Large ribosomal subunit protein bL27 from Chlorobaculum tepidum (strain ATCC 49652 / DSM 12025 / NBRC 103806 / TLS) (Chlorobium tepidum).